The following is a 339-amino-acid chain: tRNA pseudouridine synthase D (339 aa).

The active-site Nucleophile is Asp-80. In terms of domain architecture, TRUD spans Gly-155–Leu-311.

This sequence belongs to the pseudouridine synthase TruD family.

The enzyme catalyses uridine(13) in tRNA = pseudouridine(13) in tRNA. Functionally, responsible for synthesis of pseudouridine from uracil-13 in transfer RNAs. In Haemophilus influenzae (strain PittEE), this protein is tRNA pseudouridine synthase D.